The sequence spans 166 residues: Small ribosomal subunit protein uS5 (166 aa).

The 64-residue stretch at 11–74 folds into the S5 DRBM domain; sequence LQEKLIAVNR…EKARRNMMNV (64 aa).

This sequence belongs to the universal ribosomal protein uS5 family. Part of the 30S ribosomal subunit. Contacts proteins S4 and S8.

Its function is as follows. With S4 and S12 plays an important role in translational accuracy. In terms of biological role, located at the back of the 30S subunit body where it stabilizes the conformation of the head with respect to the body. In Pectobacterium atrosepticum (strain SCRI 1043 / ATCC BAA-672) (Erwinia carotovora subsp. atroseptica), this protein is Small ribosomal subunit protein uS5.